Reading from the N-terminus, the 270-residue chain is G-box-binding factor 4 (270 aa).

The disordered stretch occupies residues 1-46 (MASFKLMSSSNSDLSRRNSSSASSSPSIRSSHHLRPNPHADHSRIS). Over residues 8 to 29 (SSSNSDLSRRNSSSASSSPSIR) the composition is skewed to low complexity. Residue Ser-27 is modified to Phosphoserine. One can recognise a bZIP domain in the interval 187-250 (AAQRQKRMIK…YKKLMEVLIP (64 aa)). Residues 190-208 (RQKRMIKNRESAARSRERK) are basic motif. A leucine-zipper region spans residues 215 to 229 (LETLAAKLEEENEQL). Positions 250 to 270 (PVDEKPRPPSRPLSRSHSLEW) are disordered. Over residues 261–270 (PLSRSHSLEW) the composition is skewed to low complexity.

Belongs to the bZIP family. DNA-binding heterodimer with GBF2 and GBF3; non DNA-binding homodimer.

Its subcellular location is the nucleus. Binds to the G-box motif (5'-CCACGTGG-3') of the rbcS-1A gene promoter. G-box and G-box-like motifs are cis-acting elements defined in promoters of certain plant genes which are regulated by such diverse stimuli as light-induction or hormone control. In Arabidopsis thaliana (Mouse-ear cress), this protein is G-box-binding factor 4 (GBF4).